A 477-amino-acid polypeptide reads, in one-letter code: Adenosylhomocysteinase (477 aa).

3 residues coordinate substrate: Thr63, Asp142, and Glu202. 203–205 (TTT) serves as a coordination point for NAD(+). 2 residues coordinate substrate: Lys232 and Asp236. Residues Asn237, 266-271 (GYGDVG), Glu289, Asn324, 345-347 (IGH), and Asn390 each bind NAD(+).

This sequence belongs to the adenosylhomocysteinase family. Requires NAD(+) as cofactor.

The protein resides in the cytoplasm. It carries out the reaction S-adenosyl-L-homocysteine + H2O = L-homocysteine + adenosine. Its pathway is amino-acid biosynthesis; L-homocysteine biosynthesis; L-homocysteine from S-adenosyl-L-homocysteine: step 1/1. Its function is as follows. May play a key role in the regulation of the intracellular concentration of adenosylhomocysteine. This chain is Adenosylhomocysteinase, found in Leptothrix cholodnii (strain ATCC 51168 / LMG 8142 / SP-6) (Leptothrix discophora (strain SP-6)).